The sequence spans 879 residues: JmjC domain-containing histone demethylation protein 1 (879 aa).

Disordered regions lie at residues 1–45 (MSEQ…EEGK), 117–212 (STSP…PKRK), and 407–449 (KDVK…EGLK). Residues 23 to 116 (PEPCPLCRET…KWYCAPCLAR (94 aa)) form a PHD-type zinc finger. Composition is skewed to basic and acidic residues over residues 183-192 (IDMKSEREQQ) and 407-433 (KDVK…HLTE). The JmjC domain occupies 416–598 (NDSRESSEIR…TQLRLRQIEI (183 aa)). Threonine 472 contributes to the substrate binding site. Residues histidine 475 and aspartate 477 each coordinate Fe cation. Lysine 492 is a binding site for substrate. Histidine 566 provides a ligand contact to Fe cation. Residues 763 to 879 (HPPAWSENRQ…KVEEDMDIDH (117 aa)) form a disordered region. The segment covering 769–782 (ENRQSPQIETTTVQ) has biased composition (polar residues). Over residues 786 to 818 (PSTSSSDAISGSGPGASPGASANGGANENEQAE) the composition is skewed to low complexity. The span at 848-864 (FVEKKTVWGPKLDKEKI) shows a compositional bias: basic and acidic residues.

Belongs to the JHDM1 histone demethylase family. It depends on Fe(2+) as a cofactor.

The protein resides in the nucleus. It carries out the reaction N(6),N(6)-dimethyl-L-lysyl(36)-[histone H3] + 2 2-oxoglutarate + 2 O2 = L-lysyl(36)-[histone H3] + 2 formaldehyde + 2 succinate + 2 CO2. Its function is as follows. Histone demethylase that specifically demethylates 'Lys-36' of histone H3, thereby playing a central role in histone code. The protein is JmjC domain-containing histone demethylation protein 1 (JHD1) of Cryptococcus neoformans var. neoformans serotype D (strain B-3501A) (Filobasidiella neoformans).